Consider the following 734-residue polypeptide: Methylcrotonoyl-CoA carboxylase subunit alpha, mitochondrial (734 aa).

The N-terminal 25 residues, 1-25 (MSMMTVWALRRNVRRKNHSMLVRYI), are a transit peptide targeting the mitochondrion. Residues 37–484 (CIEKILVANR…ETHFIEHHKS (448 aa)) form the Biotin carboxylation domain. Positions 152, 236, and 271 each coordinate ATP. An ATP-grasp domain is found at 156–354 (KRIMGAAGVP…LVEWQIRVAN (199 aa)). Mn(2+) is bound by residues E311, E325, and N327. Residue R329 is part of the active site. S645 is subject to Phosphoserine. The disordered stretch occupies residues 645 to 666 (SEDEEGVQHRTSSETSSHPPGT). In terms of domain architecture, Biotinyl-binding spans 657–733 (SETSSHPPGT…SDGSALFRIK (77 aa)). An N6-biotinyllysine modification is found at K699.

As to quaternary structure, probably a heterodimer composed of biotin-containing alpha subunits and beta subunits. Biotin serves as cofactor. Mn(2+) is required as a cofactor. As to expression, in roots, cotyledons, leaves, flowers, ovaries, siliques and embryos.

It is found in the mitochondrion matrix. It carries out the reaction 3-methylbut-2-enoyl-CoA + hydrogencarbonate + ATP = 3-methyl-(2E)-glutaconyl-CoA + ADP + phosphate + H(+). Its pathway is amino-acid degradation; L-leucine degradation; (S)-3-hydroxy-3-methylglutaryl-CoA from 3-isovaleryl-CoA: step 2/3. Functionally, biotin-attachment subunit of the 3-methylcrotonyl-CoA carboxylase, an enzyme that catalyzes the conversion of 3-methylcrotonyl-CoA to 3-methylglutaconyl-CoA, a critical step for leucine and isovaleric acid catabolism. This chain is Methylcrotonoyl-CoA carboxylase subunit alpha, mitochondrial (MCCA), found in Arabidopsis thaliana (Mouse-ear cress).